Consider the following 206-residue polypeptide: MYDYLKGLITRITPEYIVLEQKGIGWQLNTPNPFAFRTSAMEQQIYVHLHVREDAQVLYGFPNLDQRELFRKLILVSGIGPKGALAILATGNPQQVISAIEREDETFLVKFPGVGKKTARQMILDLKGKLGSLLETIELPSTEDELPLFGVHPYKHELEEAILALAALGYSEKELEKIRPLLEDNDKLETTDAYMKQALQLLLKLK.

A domain I region spans residues 1-62 (MYDYLKGLIT…EDAQVLYGFP (62 aa)). The domain II stretch occupies residues 63 to 141 (NLDQRELFRK…SLLETIELPS (79 aa)). Residues 142–152 (TEDELPLFGVH) are flexible linker. The domain III stretch occupies residues 153-206 (PYKHELEEAILALAALGYSEKELEKIRPLLEDNDKLETTDAYMKQALQLLLKLK).

It belongs to the RuvA family. In terms of assembly, homotetramer. Forms an RuvA(8)-RuvB(12)-Holliday junction (HJ) complex. HJ DNA is sandwiched between 2 RuvA tetramers; dsDNA enters through RuvA and exits via RuvB. An RuvB hexamer assembles on each DNA strand where it exits the tetramer. Each RuvB hexamer is contacted by two RuvA subunits (via domain III) on 2 adjacent RuvB subunits; this complex drives branch migration. In the full resolvosome a probable DNA-RuvA(4)-RuvB(12)-RuvC(2) complex forms which resolves the HJ.

It is found in the cytoplasm. Its function is as follows. The RuvA-RuvB-RuvC complex processes Holliday junction (HJ) DNA during genetic recombination and DNA repair, while the RuvA-RuvB complex plays an important role in the rescue of blocked DNA replication forks via replication fork reversal (RFR). RuvA specifically binds to HJ cruciform DNA, conferring on it an open structure. The RuvB hexamer acts as an ATP-dependent pump, pulling dsDNA into and through the RuvAB complex. HJ branch migration allows RuvC to scan DNA until it finds its consensus sequence, where it cleaves and resolves the cruciform DNA. The polypeptide is Holliday junction branch migration complex subunit RuvA (Lysinibacillus sphaericus (strain C3-41)).